Consider the following 429-residue polypeptide: Cell wall protein ECM33 (429 aa).

The N-terminal stretch at 1-19 (MQFKNALTATAILSASALA) is a signal peptide. N-linked (GlcNAc...) asparagine glycosylation is found at Asn21, Asn56, Asn82, Asn196, Asn209, Asn227, Asn234, Asn241, Asn267, Asn279, Asn304, and Asn328. Ser339 carries the phosphoserine modification. The segment covering 361–401 (LSSTSTESSKSSATSSASSSGDASNAQANVSASASSSSSSS) has biased composition (low complexity). Residues 361 to 410 (LSSTSTESSKSSATSSASSSGDASNAQANVSASASSSSSSSKKSKGAAPE) form a disordered region. A glycan (N-linked (GlcNAc...) asparagine) is linked at Asn389. Gly406 carries GPI-anchor amidated glycine lipidation. The propeptide at 407-429 (AAPELVPATSFMGVVAAVGVALL) is removed in mature form.

Belongs to the SPS2 family. In terms of processing, the GPI-anchor is attached to the protein in the endoplasmic reticulum and serves to target the protein to the cell surface. There, the glucosamine-inositol phospholipid moiety is cleaved off and the GPI-modified mannoprotein is covalently attached via its lipidless GPI glycan remnant to the 1,6-beta-glucan of the outer cell wall layer. Post-translationally, extensively N-glycosylated.

The protein localises to the cell membrane. It is found in the secreted. Its subcellular location is the cell wall. Functionally, required for proper cell wall integrity and for the correct assembly of the mannoprotein outer layer of the cell wall. Important for apical bud growth. The polypeptide is Cell wall protein ECM33 (ECM33) (Saccharomyces cerevisiae (strain ATCC 204508 / S288c) (Baker's yeast)).